The sequence spans 212 residues: Peptide methionine sulfoxide reductase MsrA (212 aa).

Cys-52 is a catalytic residue.

Belongs to the MsrA Met sulfoxide reductase family.

The catalysed reaction is L-methionyl-[protein] + [thioredoxin]-disulfide + H2O = L-methionyl-(S)-S-oxide-[protein] + [thioredoxin]-dithiol. It carries out the reaction [thioredoxin]-disulfide + L-methionine + H2O = L-methionine (S)-S-oxide + [thioredoxin]-dithiol. Functionally, has an important function as a repair enzyme for proteins that have been inactivated by oxidation. Catalyzes the reversible oxidation-reduction of methionine sulfoxide in proteins to methionine. The polypeptide is Peptide methionine sulfoxide reductase MsrA (Yersinia enterocolitica serotype O:8 / biotype 1B (strain NCTC 13174 / 8081)).